A 727-amino-acid chain; its full sequence is Elongation factor 2 (727 aa).

The tr-type G domain occupies 19–260; sequence DQIRNMGICA…MAITHLPNPL (242 aa). GTP-binding positions include 28 to 35, 94 to 98, and 148 to 151; these read AHIDHGKT, DTPGH, and NKVD. His-603 is subject to Diphthamide.

This sequence belongs to the TRAFAC class translation factor GTPase superfamily. Classic translation factor GTPase family. EF-G/EF-2 subfamily.

It is found in the cytoplasm. Catalyzes the GTP-dependent ribosomal translocation step during translation elongation. During this step, the ribosome changes from the pre-translocational (PRE) to the post-translocational (POST) state as the newly formed A-site-bound peptidyl-tRNA and P-site-bound deacylated tRNA move to the P and E sites, respectively. Catalyzes the coordinated movement of the two tRNA molecules, the mRNA and conformational changes in the ribosome. The sequence is that of Elongation factor 2 from Methanococcus maripaludis (strain C6 / ATCC BAA-1332).